We begin with the raw amino-acid sequence, 156 residues long: Large ribosomal subunit protein uL15 (156 aa).

Residues 25-49 (RGIGCGKGKTSGRGHKGQKARSGTS) form a disordered region. The span at 34-43 (TSGRGHKGQK) shows a compositional bias: basic residues.

This sequence belongs to the universal ribosomal protein uL15 family. As to quaternary structure, part of the 50S ribosomal subunit.

Its function is as follows. Binds to the 23S rRNA. This Wolbachia sp. subsp. Brugia malayi (strain TRS) protein is Large ribosomal subunit protein uL15.